Here is a 308-residue protein sequence, read N- to C-terminus: Putative glutamine amidotransferase Rv2859c (308 aa).

Positions 1 to 62 (MDLSASRSDG…ASPRLRSPLG (62 aa)) are disordered. 3 stretches are compositionally biased toward low complexity: residues 13–24 (PLRPASPRLRSP), 31–42 (PLRPASPRLRSP), and 49–61 (PLRPASPRLRSPL). The Glutamine amidotransferase type-1 domain maps to 78-301 (RTGVWDIPAG…VDAASGYAGR (224 aa)). The active-site Nucleophile is Cys-177. Catalysis depends on residues His-277 and Glu-279. Lys-289 participates in a covalent cross-link: Isoglutamyl lysine isopeptide (Lys-Gln) (interchain with Q-Cter in protein Pup).

This chain is Putative glutamine amidotransferase Rv2859c, found in Mycobacterium tuberculosis (strain ATCC 25618 / H37Rv).